A 337-amino-acid chain; its full sequence is MYSLDFLASKLDGEVKGDKNVEIKKIATLSQAGEGDISFCTNPKYLKALSETKASAVLITEEVLEFCNTNAVVLSNPYMALAKVMELFDKSPRPDGKIHSKAVIAASAIIGENVTIGANAVVGENVVIGDNVYIGACATIDNGTKIGNDTLIKSNVSIAHDVVIGTGCIIHQNAVIGCDGFGNARDEDGSWTKIPQLGRVIIEDDVEIGSGTTVDRGAIDDTIIKKGARIDNLVQIAHNVVIGRNTALAGVTAVAGSTTIGDNCLIGGQSAITGHISICDNTIIGGASNIGKSITKPGMYYAAFEAKPRIQWGRFVAKLAKIDTLITKVKQLEEKIK.

Catalysis depends on histidine 238, which acts as the Proton acceptor.

Belongs to the transferase hexapeptide repeat family. LpxD subfamily. Homotrimer.

It catalyses the reaction a UDP-3-O-[(3R)-3-hydroxyacyl]-alpha-D-glucosamine + a (3R)-hydroxyacyl-[ACP] = a UDP-2-N,3-O-bis[(3R)-3-hydroxyacyl]-alpha-D-glucosamine + holo-[ACP] + H(+). The protein operates within bacterial outer membrane biogenesis; LPS lipid A biosynthesis. Catalyzes the N-acylation of UDP-3-O-acylglucosamine using 3-hydroxyacyl-ACP as the acyl donor. Is involved in the biosynthesis of lipid A, a phosphorylated glycolipid that anchors the lipopolysaccharide to the outer membrane of the cell. The protein is UDP-3-O-acylglucosamine N-acyltransferase 2 of Francisella tularensis subsp. tularensis (strain FSC 198).